Here is a 501-residue protein sequence, read N- to C-terminus: Lysine--tRNA ligase (501 aa).

2 residues coordinate Mg(2+): Glu-411 and Glu-418.

Belongs to the class-II aminoacyl-tRNA synthetase family. Homodimer. Requires Mg(2+) as cofactor.

Its subcellular location is the cytoplasm. The catalysed reaction is tRNA(Lys) + L-lysine + ATP = L-lysyl-tRNA(Lys) + AMP + diphosphate. The sequence is that of Lysine--tRNA ligase from Shewanella woodyi (strain ATCC 51908 / MS32).